Reading from the N-terminus, the 124-residue chain is MATVNQLVRKPRAPKVDKTNVPALNACPQKRGVCTRVYTTTPKKPNSALRKVARVRLTNGFEVTSYIGGEGHNLQEHSVILIRGGRVKDLPGVRYHTVRGALDCAGVTSRRQSRSKYGAKRPKS.

At Asp89 the chain carries 3-methylthioaspartic acid.

It belongs to the universal ribosomal protein uS12 family. As to quaternary structure, part of the 30S ribosomal subunit. Contacts proteins S8 and S17. May interact with IF1 in the 30S initiation complex.

Its function is as follows. With S4 and S5 plays an important role in translational accuracy. Functionally, interacts with and stabilizes bases of the 16S rRNA that are involved in tRNA selection in the A site and with the mRNA backbone. Located at the interface of the 30S and 50S subunits, it traverses the body of the 30S subunit contacting proteins on the other side and probably holding the rRNA structure together. The combined cluster of proteins S8, S12 and S17 appears to hold together the shoulder and platform of the 30S subunit. The sequence is that of Small ribosomal subunit protein uS12 from Shewanella oneidensis (strain ATCC 700550 / JCM 31522 / CIP 106686 / LMG 19005 / NCIMB 14063 / MR-1).